The following is a 504-amino-acid chain: Ribosomal protein uS12 methylthiotransferase RimO (504 aa).

Residues 21-131 form the MTTase N-terminal domain; the sequence is KRVGFISLGC…VMGHVRELLP (111 aa). [4Fe-4S] cluster-binding residues include C30, C66, C95, C186, C190, and C193. Residues 172–408 enclose the Radical SAM core domain; that stretch reads LTPRHYAYVK…MEVAQRISTE (237 aa). One can recognise a TRAM domain in the interval 411–487; the sequence is SEKVGRVMDV…EYDLFGEVIE (77 aa).

This sequence belongs to the methylthiotransferase family. RimO subfamily. [4Fe-4S] cluster serves as cofactor.

The protein localises to the cytoplasm. The enzyme catalyses L-aspartate(89)-[ribosomal protein uS12]-hydrogen + (sulfur carrier)-SH + AH2 + 2 S-adenosyl-L-methionine = 3-methylsulfanyl-L-aspartate(89)-[ribosomal protein uS12]-hydrogen + (sulfur carrier)-H + 5'-deoxyadenosine + L-methionine + A + S-adenosyl-L-homocysteine + 2 H(+). Functionally, catalyzes the methylthiolation of an aspartic acid residue of ribosomal protein uS12. This Deinococcus radiodurans (strain ATCC 13939 / DSM 20539 / JCM 16871 / CCUG 27074 / LMG 4051 / NBRC 15346 / NCIMB 9279 / VKM B-1422 / R1) protein is Ribosomal protein uS12 methylthiotransferase RimO.